The sequence spans 300 residues: Ankyrin repeat domain-containing protein 54 (300 aa).

The segment at 1 to 27 (MAAAAGDADDEPRSGHSSSEGECAVAP) is disordered. N-acetylalanine is present on alanine 2. Residues serine 58 and serine 63 each carry the phosphoserine modification. The short motif at 99–117 (RRLGPTGKEVHALKRLRDS) is the Nuclear localization signal (NLS) element. 4 ANK repeats span residues 109–138 (HALK…DPCA), 142–171 (KGRT…DPNQ), 175–204 (LGNT…RVDA), and 208–244 (AGRT…IIHM). The interval 141–241 (DKGRTALHFA…EAVRLEVKQI (101 aa)) is LYN-binding. The Nuclear export signal (NES) signature appears at 283 to 293 (LLASFTSLSLQ).

Interacts (via ankyrin repeat region) with LYN (via SH3-domain) in an activation-independent status of LYN. Forms a multiprotein complex with LYN and HCLS1. Interacts with TSN2, VAV1, DBNL and LASP1.

The protein resides in the nucleus. It is found in the cytoplasm. Its subcellular location is the midbody. In terms of biological role, plays an important role in regulating intracellular signaling events associated with erythroid terminal differentiation. This chain is Ankyrin repeat domain-containing protein 54 (ANKRD54), found in Homo sapiens (Human).